Consider the following 359-residue polypeptide: uncharacterized protein (359 aa).

ATP is bound at residue 46–53; the sequence is GPKSSGKS.

It belongs to the archaeal ATPase family.

This is an uncharacterized protein from Methanocaldococcus jannaschii (strain ATCC 43067 / DSM 2661 / JAL-1 / JCM 10045 / NBRC 100440) (Methanococcus jannaschii).